Here is a 259-residue protein sequence, read N- to C-terminus: MLMVISPAKTLDYETPPVTQRFTQPQYLDHSQELIQQLRQLTPLQISELMKLSDKLAGLNAARYASWHPDFTPQNAKQALLAFKGDVYTGLDAESFSEDDFAFAQEHLRMLSGLYGVLRPLDLMQPYRLEMGTRLANARGKDLYAFWGERISQWLNEALAAQGDDVLLNLASNEYFGAVKRKALQARIIDTEFKDLKNGQYKIISFYAKKARGMMARYVVRERLRDPAGLKDFNAHGYYFSAEQSGPEQLVFLRDAPQD.

The protein belongs to the UPF0246 family.

The sequence is that of UPF0246 protein PSPA7_1607 from Pseudomonas paraeruginosa (strain DSM 24068 / PA7) (Pseudomonas aeruginosa (strain PA7)).